The sequence spans 136 residues: Cancer/testis antigen 62 (136 aa).

The disordered stretch occupies residues 1 to 22 (MMHTTSYRRLSPPHLTDQPSAY).

As to expression, testis specific. Expressed in cancer cell lines.

This chain is Cancer/testis antigen 62 (CT62), found in Homo sapiens (Human).